Consider the following 340-residue polypeptide: DnaJ homolog subfamily C member 22 (340 aa).

A TM2 domain is found at 1–50 (MGKSLLAAYGLWALGGPLGLYHIYLGRDSHALLWMLTLGGFGMGWMWDFW). 7 consecutive transmembrane segments (helical) span residues 5–25 (LLAA…HIYL), 30–50 (HALL…WDFW), 81–101 (FIGQ…GLSF), 105–125 (FHMV…ATVG), 135–155 (LIAA…MIPI), 186–206 (IGLV…LNTS), and 212–232 (VAGS…ISAL). The J domain occupies 278-340 (MACKVLGVNF…LMRLRKSKTL (63 aa)).

Its subcellular location is the membrane. In terms of biological role, may function as a co-chaperone. The protein is DnaJ homolog subfamily C member 22 (dnajc22) of Xenopus tropicalis (Western clawed frog).